Here is a 250-residue protein sequence, read N- to C-terminus: Probable phosphatase VPA1527 (250 aa).

Residues H8, H10, H16, H41, E74, H102, H132, D194, and H196 each coordinate Zn(2+).

The protein belongs to the PHP family. Zn(2+) serves as cofactor.

The chain is Probable phosphatase VPA1527 from Vibrio parahaemolyticus serotype O3:K6 (strain RIMD 2210633).